We begin with the raw amino-acid sequence, 66 residues long: KEGYIVNYYDGCKYPCVKLGDNDYCLRECRLRYYKSAGGYCYAFACWCTHLYEQAVVWPLPNKTCN.

The 66-residue stretch at 1–66 folds into the LCN-type CS-alpha/beta domain; that stretch reads KEGYIVNYYD…VWPLPNKTCN (66 aa). Cystine bridges form between C12–C65, C16–C41, C25–C46, and C29–C48.

As to expression, expressed by the venom gland.

It is found in the secreted. Its function is as follows. Beta toxins bind voltage-independently at site-4 of sodium channels (Nav) and shift the voltage of activation toward more negative potentials thereby affecting sodium channel activation and promoting spontaneous and repetitive firing. This toxin acts on human Nav1.2/SCN2A, Nav1.4/SCN4A and Nav1.6/SCN8A voltage-gated sodium channels. Also, it reduces the peak of sodium currents in Nav1.5/SCN5A at all potentials. In vivo, is lethal to mice when intraperitoneally injected at a dose of 5ug. No activity is observed when injected into crickets or woodlice. This is Beta-mammal toxin Co3 from Centruroides ornatus (Scorpion).